The sequence spans 290 residues: 4-hydroxy-tetrahydrodipicolinate synthase (290 aa).

T42 contacts pyruvate. Catalysis depends on Y129, which acts as the Proton donor/acceptor. K157 (schiff-base intermediate with substrate) is an active-site residue. Position 198 (I198) interacts with pyruvate.

This sequence belongs to the DapA family. Homotetramer; dimer of dimers.

Its subcellular location is the cytoplasm. The enzyme catalyses L-aspartate 4-semialdehyde + pyruvate = (2S,4S)-4-hydroxy-2,3,4,5-tetrahydrodipicolinate + H2O + H(+). It functions in the pathway amino-acid biosynthesis; L-lysine biosynthesis via DAP pathway; (S)-tetrahydrodipicolinate from L-aspartate: step 3/4. Catalyzes the condensation of (S)-aspartate-beta-semialdehyde [(S)-ASA] and pyruvate to 4-hydroxy-tetrahydrodipicolinate (HTPA). This chain is 4-hydroxy-tetrahydrodipicolinate synthase, found in Chlamydia felis (strain Fe/C-56) (Chlamydophila felis).